The sequence spans 828 residues: Fibroblast growth factor receptor 4 (828 aa).

Positions 1-31 are cleaved as a signal peptide; that stretch reads MSGSIRRSYTAMQNFPRFLLGVLFVATLSSC. At 32–392 the chain is on the extracellular side; sequence RPRLSEDEAN…AEPAESRYMD (361 aa). The region spanning 33–127 is the Ig-like C2-type 1 domain; sequence PRLSEDEANW…GKILRRFSIS (95 aa). Residues C67 and C112 are joined by a disulfide bond. N70 carries N-linked (GlcNAc...) asparagine glycosylation. Residues 132 to 156 are disordered; sequence LASGDEEEEEEDDDDEDGRREDTTA. The segment covering 135 to 147 has biased composition (acidic residues); the sequence is GDEEEEEEDDDDE. 2 consecutive Ig-like C2-type domains span residues 169-259 and 272-372; these read PYWT…LTYT and PILQ…AWLT. A disulfide bridge links C194 with C247. N-linked (GlcNAc...) asparagine glycosylation is found at N244, N281, N313, and N345. Cysteines 294 and 356 form a disulfide. Residues 393–413 traverse the membrane as a helical segment; it reads IIIYTSGFLAVAMAIMIVILC. Residues 414 to 828 are Cytoplasmic-facing; that stretch reads RMQTPHSKQT…YHNIHSQLGT (415 aa). The Protein kinase domain occupies 490-777; sequence LVLGKPLGEG…ILTAVSEEYL (288 aa). ATP-binding positions include 496–504 and K526; that span reads LGEGCFGQV. The Proton acceptor role is filled by D635. 3 positions are modified to phosphotyrosine; by autocatalysis: Y665, Y666, and Y776.

The protein belongs to the protein kinase superfamily. Tyr protein kinase family. Fibroblast growth factor receptor subfamily. In terms of processing, ubiquitinated. Subject to proteasomal degradation when not fully glycosylated. Post-translationally, autophosphorylated. Binding of FGF family members together with heparan sulfate proteoglycan or heparin promotes receptor dimerization and autophosphorylation on tyrosine residues. Autophosphorylation occurs in trans between the two FGFR molecules present in the dimer.

It is found in the cell membrane. The protein localises to the endosome. It localises to the endoplasmic reticulum. The enzyme catalyses L-tyrosyl-[protein] + ATP = O-phospho-L-tyrosyl-[protein] + ADP + H(+). Present in an inactive conformation in the absence of bound ligand. Ligand binding leads to dimerization and activation by autophosphorylation on tyrosine residues. Its function is as follows. Tyrosine-protein kinase that acts as a cell-surface receptor for fibroblast growth factors and plays a role in the regulation of cell proliferation, differentiation and migration, and in regulation of lipid metabolism, bile acid biosynthesis, glucose uptake, vitamin D metabolism and phosphate homeostasis. Required for normal down-regulation of the expression of CYP7A1, the rate-limiting enzyme in bile acid synthesis, in response to FGF19. Phosphorylates PLCG1 and FRS2. Ligand binding leads to the activation of several signaling cascades. Activation of PLCG1 leads to the production of the cellular signaling molecules diacylglycerol and inositol 1,4,5-trisphosphate. Phosphorylation of FRS2 triggers recruitment of GRB2, GAB1, PIK3R1 and SOS1, and mediates activation of RAS, MAPK1/ERK2, MAPK3/ERK1 and the MAP kinase signaling pathway, as well as of the AKT1 signaling pathway. This chain is Fibroblast growth factor receptor 4 (fgfr4), found in Xenopus laevis (African clawed frog).